The chain runs to 103 residues: Omega toxin Ap5 (103 aa).

The signal sequence occupies residues 1-22 (MNTIQVILFAVVLVLTVTVGQA). Residues 23 to 57 (DEDSAETSLLRKLEEAEASMFGQYLEESKNSREKR) constitute a propeptide that is removed on maturation. 3 cysteine pairs are disulfide-bonded: Cys-58/Cys-73, Cys-65/Cys-78, and Cys-72/Cys-93.

Belongs to the neurotoxin 14 (magi-1) family. 08 (Ltx-4) subfamily. As to expression, expressed by the venom duct.

It localises to the secreted. In terms of biological role, shows a weak inhibition on the voltage-gated calcium channel Cav2.1/CACNA1A and some voltage-gated sodium channels (with 1 uM toxin tested: 22.08% inhibition on Cav2.1/CACNA1A, 6.6% on Nav1.1/SCN1A, 4.2% on Nav1.5, and 16% on Nav1.7). Its function is as follows. Shows a weak inhibition on the voltage-gated calcium channel Cav2.1/CACNA1A (28.06% at 1 uM). This Acanthoscurria paulensis (Brazilian giant black tarantula spider) protein is Omega toxin Ap5.